Reading from the N-terminus, the 816-residue chain is Subtilisin-like protease SBT2.6 (816 aa).

Positions 1–19 are cleaved as a signal peptide; the sequence is MDIGCKVLVFFTCFLTVTA. Residues 20–126 constitute a propeptide, activation peptide; it reads EIYIVTMEGE…VDRDWKVRKL (107 aa). In terms of domain architecture, Inhibitor I9 spans 22-124; it reads YIVTMEGEPI…KSVDRDWKVR (103 aa). Residues 120-672 enclose the Peptidase S8 domain; that stretch reads DWKVRKLTTH…SGHVNPSAAL (553 aa). Catalysis depends on charge relay system residues D160 and H235. The PA domain occupies 418–492; the sequence is DCQKPEVLNK…SCIPGILITD (75 aa). Residues N504 and N578 are each glycosylated (N-linked (GlcNAc...) asparagine). S597 serves as the catalytic Charge relay system. N702 carries N-linked (GlcNAc...) asparagine glycosylation.

It belongs to the peptidase S8 family.

The protein resides in the secreted. The chain is Subtilisin-like protease SBT2.6 from Arabidopsis thaliana (Mouse-ear cress).